The sequence spans 519 residues: 3-octaprenyl-4-hydroxybenzoate carboxy-lyase (519 aa).

Asparagine 177 lines the Mn(2+) pocket. Prenylated FMN-binding positions include 180 to 182, 194 to 196, and 199 to 200; these read IYR, RWL, and RG. Glutamate 243 serves as a coordination point for Mn(2+). The active-site Proton donor is aspartate 318.

Belongs to the UbiD family. As to quaternary structure, homohexamer. Requires prenylated FMN as cofactor. Mn(2+) serves as cofactor.

The protein resides in the cell membrane. The enzyme catalyses a 4-hydroxy-3-(all-trans-polyprenyl)benzoate + H(+) = a 2-(all-trans-polyprenyl)phenol + CO2. The protein operates within cofactor biosynthesis; ubiquinone biosynthesis. Functionally, catalyzes the decarboxylation of 3-octaprenyl-4-hydroxy benzoate to 2-octaprenylphenol, an intermediate step in ubiquinone biosynthesis. The polypeptide is 3-octaprenyl-4-hydroxybenzoate carboxy-lyase (Burkholderia pseudomallei (strain 1710b)).